A 335-amino-acid polypeptide reads, in one-letter code: Flagellar P-ring protein (335 aa).

Positions 1-24 are cleaved as a signal peptide; that stretch reads MNKITNFLILSAVLFFSLIESANA.

The protein belongs to the FlgI family. As to quaternary structure, the basal body constitutes a major portion of the flagellar organelle and consists of four rings (L,P,S, and M) mounted on a central rod.

Its subcellular location is the periplasm. It localises to the bacterial flagellum basal body. Assembles around the rod to form the L-ring and probably protects the motor/basal body from shearing forces during rotation. This is Flagellar P-ring protein from Bdellovibrio bacteriovorus (strain ATCC 15356 / DSM 50701 / NCIMB 9529 / HD100).